The primary structure comprises 326 residues: MKMPNTLHSVSISTDFPSPNVESEAADVNEYSSTSKFETLGNQSSTNLGFSNSLQDKWDCWKRDLWSIWWSLSRKATRFYRWLSRSLKWRPVTYETVYPQTYETQMSEPREVTTIVKDLNNGDSFVLNVTEPVDPEFLRANIPPVHRKHLPPRLSLVASPGTIPTRGVVVLEDWINPLLSERCKLLLQSELCNQDSYDCPGYICVYRFEQKNNPSVVLGDSTLIQISRVSDLQRHLREYPKNCAFSRSVLEIFPDPGKTSKPCQVSFKVERLVHKELNEYLSWMQPFTCDSCGSLHENWLQIDSKQWDQIRGVILRWVEYSRVIYA.

It is found in the cytoplasm. In terms of biological role, has a role in meiosis. The chain is Meiotically up-regulated gene 113 protein (mug113) from Schizosaccharomyces pombe (strain 972 / ATCC 24843) (Fission yeast).